The primary structure comprises 346 residues: Low specificity L-threonine aldolase (346 aa).

Lysine 207 carries the N6-(pyridoxal phosphate)lysine modification.

This sequence belongs to the threonine aldolase family. Homotetramer. The cofactor is pyridoxal 5'-phosphate.

It catalyses the reaction L-threonine = acetaldehyde + glycine. The catalysed reaction is L-allo-threonine = acetaldehyde + glycine. Its function is as follows. Catalyzes the cleavage of L-allo-threonine and L-threonine to glycine and acetaldehyde. Can also act on L-erythro-phenylserine, L-threo-phenylserine, L-beta-3,4-methylenedioxyphenylserine and L-beta-3,4-dihydroxyphenylserine. The sequence is that of Low specificity L-threonine aldolase (ltaE) from Pseudomonas sp. (strain NCIMB 10558).